The sequence spans 789 residues: Cell pattern formation-associated protein stuA (789 aa).

2 disordered regions span residues 50–131 (PALS…NTVG) and 205–224 (PGGVTSSQPGPQPPTTSVSS). 3 stretches are compositionally biased toward polar residues: residues 55-69 (PTASQPPISGQSYRT), 76-88 (ASHNASARTSLSG), and 115-131 (LDSSAPQEFSIPQNTVG). The HTH APSES-type domain occupies 272 to 378 (RVTATLWEDE…HNIGGLLYHP (107 aa)). A DNA-binding region (H-T-H motif) is located at residues 306-327 (GTKLLNVAGMTRGRRDGILKSE). Disordered regions lie at residues 389 to 459 (QESQ…ASSL), 487 to 543 (SIDT…YAPQ), and 616 to 789 (HDSA…ARRR). Polar residues-rich tracts occupy residues 419–438 (LQTPVPSHMSQPHAMTSQSA), 487–529 (SIDT…SKSY), 620–636 (GYNTNRGSYTYTTNPSV), 645–667 (QLASDMSGSPSQQNGSGRMTPRT), and 676–713 (SGYNTPPRSAAVSSLYNSVSETRGASANGTTDNYSVAS). Residues 731–758 (KRMREDDDVDQIVRPDSRGAEYESKRRK) are nuclear localization domain. Residues 741–754 (QIVRPDSRGAEYES) are compositionally biased toward basic and acidic residues.

It belongs to the EFG1/PHD1/stuA family.

It is found in the nucleus. In terms of biological role, transcription factor that regulates asexual reproduction. Binds the StuA-response elements (StRE) with the consensus sequence 5'-(A/T)CGCG(T/A)N(A/C)-3' at the promoters of target genes. The chain is Cell pattern formation-associated protein stuA from Aspergillus flavus (strain ATCC 200026 / FGSC A1120 / IAM 13836 / NRRL 3357 / JCM 12722 / SRRC 167).